The chain runs to 154 residues: Aspartate carbamoyltransferase regulatory chain (154 aa).

4 residues coordinate Zn(2+): Cys109, Cys114, Cys138, and Cys141.

This sequence belongs to the PyrI family. Contains catalytic and regulatory chains. Requires Zn(2+) as cofactor.

Its function is as follows. Involved in allosteric regulation of aspartate carbamoyltransferase. This chain is Aspartate carbamoyltransferase regulatory chain, found in Serratia proteamaculans (strain 568).